The sequence spans 250 residues: MRIPLIAGNWKMYKTVGEATTLVRDLLAGLGELSDREAIVCPPFTALAAVAALVADSPLGLGAQNLYPEAQGAFTGEVSPPMLVDIGCRYVIIGHSERRQYFGESDAFVNRKLRAALAHGLRPIVCVGESKPQRDAGQAEPIVTAQVRAALLEVPPDQMANVVIAYEPIWAIGTGDTATPADAQAMHAAIRATLAELYGSEIAATVRIQYGGSVKPDNIDELMAQPDIDGALVGGASLQAASFLRIIHYQ.

9–11 is a binding site for substrate; sequence NWK. Residue His95 is the Electrophile of the active site. Glu167 serves as the catalytic Proton acceptor. Residues Gly173, Ser213, and 234 to 235 contribute to the substrate site; that span reads GG.

The protein belongs to the triosephosphate isomerase family. Homodimer.

Its subcellular location is the cytoplasm. It catalyses the reaction D-glyceraldehyde 3-phosphate = dihydroxyacetone phosphate. It functions in the pathway carbohydrate biosynthesis; gluconeogenesis. It participates in carbohydrate degradation; glycolysis; D-glyceraldehyde 3-phosphate from glycerone phosphate: step 1/1. In terms of biological role, involved in the gluconeogenesis. Catalyzes stereospecifically the conversion of dihydroxyacetone phosphate (DHAP) to D-glyceraldehyde-3-phosphate (G3P). In Chloroflexus aurantiacus (strain ATCC 29366 / DSM 635 / J-10-fl), this protein is Triosephosphate isomerase.